We begin with the raw amino-acid sequence, 632 residues long: Gamma-aminobutyric acid receptor subunit theta (632 aa).

Positions 1-21 (MGIRGMLRAAVILLLIRTWLA) are cleaved as a signal peptide. At 22–268 (EGNYPSPIPK…FQVQREVNSY (247 aa)) the chain is on the extracellular side. The N-linked (GlcNAc...) asparagine glycan is linked to Asn-127. Cys-183 and Cys-197 are joined by a disulfide. A helical membrane pass occupies residues 269 to 289 (LVQVYWPTVLTTITSWISFWM). The Cytoplasmic segment spans residues 290-297 (NYDSSAAR). Residues 298–315 (VTIGLTSMLILTTIDSHL) form a helical membrane-spanning segment. Residues 316–326 (RDKLPNISCIK) lie on the Extracellular side of the membrane. Residues 327 to 347 (AIDIYILVCLFFVFLSLLEYV) form a helical membrane-spanning segment. Residues 348-611 (YINYLFYSRG…DYVPKVDKWS (264 aa)) are Cytoplasmic-facing. Disordered stretches follow at residues 410 to 458 (SPES…STSE) and 491 to 523 (HGVT…LHHG). Residues 413–425 (SLGSLTSTSEQAQ) are compositionally biased toward polar residues. Low complexity predominate over residues 426–439 (LATSESLSPLTSLS). The segment covering 448–458 (ESLSDLPSTSE) has biased composition (polar residues). Residues 491-511 (HGVTHDHEDSNESLSSDERHG) show a composition bias toward basic and acidic residues. The helical transmembrane segment at 612–632 (RFLFPLAFGLFNIVYWVYHMY) threads the bilayer.

This sequence belongs to the ligand-gated ion channel (TC 1.A.9) family. Gamma-aminobutyric acid receptor (TC 1.A.9.5) subfamily. GABRQ sub-subfamily. In terms of assembly, heteropentamer, formed by a combination of alpha (GABRA1-6), beta (GABRB1-3), gamma (GABRG1-3), delta (GABRD), epsilon (GABRE), rho (GABRR1-3), pi (GABRP) and theta (GABRQ) chains, each subunit exhibiting distinct physiological and pharmacological properties. As to expression, expressed in brain.

It localises to the postsynaptic cell membrane. Its subcellular location is the cell membrane. The enzyme catalyses chloride(in) = chloride(out). With respect to regulation, potentiated by etomidate, propofol, pregnanolone and pentobarbital. Functionally, theta subunit of the heteropentameric ligand-gated chloride channel gated by gamma-aminobutyric acid (GABA), a major inhibitory neurotransmitter in the brain. GABA-gated chloride channels, also named GABA(A) receptors (GABAAR), consist of five subunits arranged around a central pore and contain GABA active binding site(s) located at the alpha and beta subunit interfaces. When activated by GABA, GABAARs selectively allow the flow of chloride anions across the cell membrane down their electrochemical gradient. This Homo sapiens (Human) protein is Gamma-aminobutyric acid receptor subunit theta.